A 197-amino-acid chain; its full sequence is Peptidyl-tRNA hydrolase (197 aa).

Y23 contributes to the tRNA binding site. H28 acts as the Proton acceptor in catalysis. TRNA-binding residues include F73, N75, and N121.

This sequence belongs to the PTH family. As to quaternary structure, monomer.

The protein resides in the cytoplasm. It catalyses the reaction an N-acyl-L-alpha-aminoacyl-tRNA + H2O = an N-acyl-L-amino acid + a tRNA + H(+). Hydrolyzes ribosome-free peptidyl-tRNAs (with 1 or more amino acids incorporated), which drop off the ribosome during protein synthesis, or as a result of ribosome stalling. Functionally, catalyzes the release of premature peptidyl moieties from peptidyl-tRNA molecules trapped in stalled 50S ribosomal subunits, and thus maintains levels of free tRNAs and 50S ribosomes. This Frankia casuarinae (strain DSM 45818 / CECT 9043 / HFP020203 / CcI3) protein is Peptidyl-tRNA hydrolase.